The chain runs to 117 residues: MIKTYNGSKLGIASSHRKALLRNLAAALFLYEKITTTLSKAKELVSYSEKLVTKAKKADLSAMRAINGEINSKAAVKKIFDILVPRYKERSGGYTQILKVGTRRGDSADVAIVKLVT.

The protein belongs to the bacterial ribosomal protein bL17 family. In terms of assembly, part of the 50S ribosomal subunit. Contacts protein L32.

The polypeptide is Large ribosomal subunit protein bL17 (Endomicrobium trichonymphae).